A 345-amino-acid chain; its full sequence is Serpentine receptor class beta-5 (345 aa).

At Met-1–Arg-22 the chain is on the extracellular side. Asn-5 carries an N-linked (GlcNAc...) asparagine glycan. Residues Leu-23–Leu-43 form a helical membrane-spanning segment. Residues Leu-44–Lys-57 are Cytoplasmic-facing. The helical transmembrane segment at Cys-58–Phe-78 threads the bilayer. The Extracellular segment spans residues Ser-79 to Cys-103. The helical transmembrane segment at Gly-104–Ile-124 threads the bilayer. Residues Glu-125–Leu-142 lie on the Cytoplasmic side of the membrane. A helical transmembrane segment spans residues Leu-143–Phe-163. Topologically, residues Arg-164 to Tyr-189 are extracellular. Residues Leu-190 to Phe-210 traverse the membrane as a helical segment. Topologically, residues His-211 to Thr-241 are cytoplasmic. The helical transmembrane segment at Leu-242–Val-262 threads the bilayer. Residues Arg-263 to Arg-280 are Extracellular-facing. Residues Gly-281–Leu-301 form a helical membrane-spanning segment. At Arg-302 to Arg-345 the chain is on the cytoplasmic side.

It belongs to the nematode receptor-like protein srb family. Expressed throughout the head.

The protein localises to the cell membrane. Its subcellular location is the perikaryon. The protein resides in the cell projection. It localises to the dendrite. Functionally, G-protein coupled receptor. Plays a role in the navigational capacity of sperm and promotes the targeting of sperm derived from males to the fertilization site in the uterus of hermaphrodites. This Caenorhabditis elegans protein is Serpentine receptor class beta-5.